Consider the following 245-residue polypeptide: Endo-chitosanase (245 aa).

Residues 1–17 (MHFAGIVAIALATGATA) form the signal peptide.

Belongs to the glycosyl hydrolase 75 family.

The protein resides in the secreted. The catalysed reaction is Endohydrolysis of beta-(1-&gt;4)-linkages between D-glucosamine residues in a partly acetylated chitosan.. Chitosanase catalyzing the endo-type cleavage of chitosan, the deacylated form of chitin. Chitosanase may be crucial in the degradation of the deacetylated portion of chitin in the fungal cell wall. Chitoolisaccharides produced by the hydrolysis of partially N-acetylated chitosan are known to have many biological activities, including antibacterial activity, immune-enhancing effects, and elicitor activity. In Aspergillus oryzae (strain ATCC 42149 / RIB 40) (Yellow koji mold), this protein is Endo-chitosanase (csn).